The primary structure comprises 83 residues: Small ribosomal subunit protein uS17 (83 aa).

The protein belongs to the universal ribosomal protein uS17 family. In terms of assembly, part of the 30S ribosomal subunit.

One of the primary rRNA binding proteins, it binds specifically to the 5'-end of 16S ribosomal RNA. The polypeptide is Small ribosomal subunit protein uS17 (Campylobacter hominis (strain ATCC BAA-381 / DSM 21671 / CCUG 45161 / LMG 19568 / NCTC 13146 / CH001A)).